The primary structure comprises 160 residues: Afimbrial adhesin AFA-III (160 aa).

Positions 1–21 (MKKLAIMAAASMVFAVSSAHA) are cleaved as a signal peptide. Residues 22-75 (GFTPSGTTGTTKLTVTEECQVRVGDLTVAKTRGQLTDAAPIGPVTVQALGCNAR) form a receptor-binding region.

The protein belongs to the Dr-adhesin family.

Its subcellular location is the fimbrium. Hemagglutinins of uropathogenic E.coli mediate adherence to the upper urinary tract. These adhesins bind to the Dr blood group antigen and also agglutinate human erythrocytes in the presence of D-mannose (mannose-resistant hemagglutination (MRHA)). The protein is Afimbrial adhesin AFA-III (afaE3) of Escherichia coli.